The primary structure comprises 1029 residues: Collagen, type I, alpha 1b (1029 aa).

Residues 1 to 990 (QMSYVDHSKS…KAPDPFRGGH (990 aa)) are disordered. Residues 13 to 33 (PPQPGPMGPMGPRGPPGPPGS) are compositionally biased toward pro residues. The segment covering 34 to 57 (SGPQGFTGPPGEPGEPGASGAMGS) has biased composition (low complexity). A compositionally biased stretch (basic and acidic residues) spans 67 to 81 (NGDDGEPGKPGRPGE). Composition is skewed to low complexity over residues 82 to 91 (RGAAGPQGAR), 120 to 129 (VPGVMGARGR), and 136 to 147 (SGARGNDGNTGP). Positions 163–182 (PGGAGAKGETGPAGGRGNEG) are enriched in gly residues. Composition is skewed to low complexity over residues 199–223 (AGPA…AGLA), 233–267 (AQGA…PGPA), and 299–309 (ERGAPGARGFP). Gly residues predominate over residues 310–322 (GADGGAGGKGAPG). 2 stretches are compositionally biased toward low complexity: residues 323–351 (ERGA…PGSK) and 429–465 (VGAP…QGAT). Positions 466 to 477 (GETGKGLGGPTG) are enriched in gly residues. The span at 478–497 (PRGAPGPAGNDGAKGEPGAA) shows a compositional bias: low complexity. Gly residues-rich tracts occupy residues 498–507 (GAPGGLGAPG) and 531–540 (GGKGGDGAPG). Low complexity-rich tracts occupy residues 571–580 (VAGPTGPRGA) and 593–620 (AGFA…KGDA). Composition is skewed to gly residues over residues 621–630 (GAPGPGGPVG) and 645–654 (GARGGAGPPG). Composition is skewed to low complexity over residues 655 to 665 (ATGFPGPAGRV), 694 to 722 (ETGA…PGXD), 731 to 743 (PQGL…LPGQ), 830 to 839 (APGAVGPSGK), and 855 to 869 (SGPA…PAGA). Basic and acidic residues predominate over residues 870–884 (KGDRGEAGEAGDRGG). Positions 906–934 (PAGASGPAGPRGPAGSNGAPGKDGMNGLP) are enriched in low complexity. Residues 952 to 967 (AGPPGPPGPAGPPGPP) show a composition bias toward pro residues. In terms of domain architecture, Fibrillar collagen NC1 spans 999–1029 (TQKLPLLDLAPMDVGAPDQEFGVEVGPVCFL).

Belongs to the fibrillar collagen family.

The protein resides in the secreted. It is found in the extracellular space. It localises to the extracellular matrix. The protein is Collagen, type I, alpha 1b of Epinephelus aeneus (White grouper).